A 327-amino-acid chain; its full sequence is Phospho-N-acetylmuramoyl-pentapeptide-transferase (327 aa).

10 helical membrane passes run 3–23 (TAII…PAFI), 51–71 (TMGG…IALF), 79–99 (VTTI…DDFL), 115–135 (LFLQ…HGGG), 140–160 (VFGF…FWLV), 172–192 (IDGL…VIAL), 197–217 (FDLL…FGFN), 223–243 (IFMG…LSIA), 248–268 (WTLL…MLQV), and 306–326 (VDFL…AILY).

Belongs to the glycosyltransferase 4 family. MraY subfamily. It depends on Mg(2+) as a cofactor.

Its subcellular location is the cell membrane. The catalysed reaction is UDP-N-acetyl-alpha-D-muramoyl-L-alanyl-gamma-D-glutamyl-L-lysyl-D-alanyl-D-alanine + di-trans,octa-cis-undecaprenyl phosphate = Mur2Ac(oyl-L-Ala-gamma-D-Glu-L-Lys-D-Ala-D-Ala)-di-trans,octa-cis-undecaprenyl diphosphate + UMP. It participates in cell wall biogenesis; peptidoglycan biosynthesis. Catalyzes the initial step of the lipid cycle reactions in the biosynthesis of the cell wall peptidoglycan: transfers peptidoglycan precursor phospho-MurNAc-pentapeptide from UDP-MurNAc-pentapeptide onto the lipid carrier undecaprenyl phosphate, yielding undecaprenyl-pyrophosphoryl-MurNAc-pentapeptide, known as lipid I. This chain is Phospho-N-acetylmuramoyl-pentapeptide-transferase, found in Streptococcus gordonii (strain Challis / ATCC 35105 / BCRC 15272 / CH1 / DL1 / V288).